We begin with the raw amino-acid sequence, 309 residues long: Thioredoxin reductase (309 aa).

35-42 lines the FAD pocket; sequence EKQFPGGK. A disulfide bridge connects residues Cys134 and Cys137. 277–286 provides a ligand contact to FAD; sequence DIVDKNVRQI.

This sequence belongs to the class-II pyridine nucleotide-disulfide oxidoreductase family. Homodimer. The cofactor is FAD.

It is found in the cytoplasm. The catalysed reaction is [thioredoxin]-dithiol + NADP(+) = [thioredoxin]-disulfide + NADPH + H(+). The sequence is that of Thioredoxin reductase (trxB) from Ureaplasma parvum serovar 3 (strain ATCC 700970).